Consider the following 308-residue polypeptide: Methionyl-tRNA formyltransferase (308 aa).

Residue 110 to 113 (SLLP) participates in (6S)-5,6,7,8-tetrahydrofolate binding.

It belongs to the Fmt family.

The catalysed reaction is L-methionyl-tRNA(fMet) + (6R)-10-formyltetrahydrofolate = N-formyl-L-methionyl-tRNA(fMet) + (6S)-5,6,7,8-tetrahydrofolate + H(+). In terms of biological role, attaches a formyl group to the free amino group of methionyl-tRNA(fMet). The formyl group appears to play a dual role in the initiator identity of N-formylmethionyl-tRNA by promoting its recognition by IF2 and preventing the misappropriation of this tRNA by the elongation apparatus. In Neisseria meningitidis serogroup C / serotype 2a (strain ATCC 700532 / DSM 15464 / FAM18), this protein is Methionyl-tRNA formyltransferase.